Here is a 303-residue protein sequence, read N- to C-terminus: UDP-3-O-acyl-N-acetylglucosamine deacetylase (303 aa).

Zn(2+) contacts are provided by histidine 78, histidine 237, and aspartate 241. Residue histidine 264 is the Proton donor of the active site.

The protein belongs to the LpxC family. It depends on Zn(2+) as a cofactor.

The catalysed reaction is a UDP-3-O-[(3R)-3-hydroxyacyl]-N-acetyl-alpha-D-glucosamine + H2O = a UDP-3-O-[(3R)-3-hydroxyacyl]-alpha-D-glucosamine + acetate. The protein operates within glycolipid biosynthesis; lipid IV(A) biosynthesis; lipid IV(A) from (3R)-3-hydroxytetradecanoyl-[acyl-carrier-protein] and UDP-N-acetyl-alpha-D-glucosamine: step 2/6. Its function is as follows. Catalyzes the hydrolysis of UDP-3-O-myristoyl-N-acetylglucosamine to form UDP-3-O-myristoylglucosamine and acetate, the committed step in lipid A biosynthesis. In Stenotrophomonas maltophilia (strain R551-3), this protein is UDP-3-O-acyl-N-acetylglucosamine deacetylase.